Here is a 999-residue protein sequence, read N- to C-terminus: Testis anion transporter 1 (999 aa).

Topologically, residues 1 to 93 (MQTERSLQSF…YRFKDWLLGD (93 aa)) are cytoplasmic. A helical membrane pass occupies residues 94 to 114 (LLAGLSVGLVQVPQGLILSLL). At 115–117 (TRQ) the chain is on the extracellular side. A helical transmembrane segment spans residues 118–138 (LIPPLNVTYAAFCSSVIYVIF). Glycine 139 is a topological domain (cytoplasmic). Residues 140–160 (SCHQMSIGPFFLVSALMINVL) traverse the membrane as a helical segment. At 161-200 (KDRPFNNGHLILGTFVKDDFSVPTFYLSYNRSLSMVASTT) the chain is on the extracellular side. N-linked (GlcNAc...) asparagine glycosylation occurs at asparagine 190. The helical transmembrane segment at 201–221 (FLTGIIQLSMGMLGMGFMATY) threads the bilayer. The Cytoplasmic segment spans residues 222–230 (LPEAATSAY). A helical membrane pass occupies residues 231 to 251 (LAAVALHIILAQMTCILGIMV). Residues 252-268 (SFHAGPISFIYNIINYC) are Extracellular-facing. The helical transmembrane segment at 269–289 (IALPKANSTSILLFITSVVAL) threads the bilayer. At 290-305 (RINKCIRITFNRYPIE) the chain is on the cytoplasmic side. The chain crosses the membrane as a helical span at residues 306-326 (FPMELLLILGFSLLTSKITMA). Over 327 to 354 (TENSKMLMNMIPYSFVFPENPEFGILSR) the chain is Extracellular. A helical membrane pass occupies residues 355–375 (VVLQALSLSFVSSFLLISLGK). At 376-390 (KIANFHNYRTNSNQD) the chain is on the cytoplasmic side. The helical transmembrane segment at 391–411 (LIAIGLCNLLSSFFKCCVFTG) threads the bilayer. The Extracellular segment spans residues 412–427 (SLSRTTIQDKSGGRQQ). A helical transmembrane segment spans residues 428-448 (FASLVGAGVMLLLMVKMESFF). Topologically, residues 449–453 (HNLPN) are cytoplasmic. The chain crosses the membrane as a helical span at residues 454-474 (AVLAGIILSNVVPYLEAIYNL). Residues 475–494 (PSLWRQDQYECIIWMVTFSS) are Extracellular-facing. The helical transmembrane segment at 495–515 (AILLGLDVGLLISLAFTFFVI) threads the bilayer. The Cytoplasmic portion of the chain corresponds to 516 to 544 (TIRSHRTKILVLGQIPNTNIYRNVNDYRE). The STAS domain maps to 541–796 (DYREVILIPG…LSLHDAVLFA (256 aa)). Residues 545 to 565 (VILIPGVKIFQCCSSITFVNV) form a helical membrane-spanning segment. The Extracellular segment spans residues 566 to 999 (YHLKQKVLKE…RKPHNYPNSP (434 aa)). The tract at residues 661-999 (TVSSTSQRNI…RKPHNYPNSP (339 aa)) is interaction with RACGAP1. 2 disordered regions span residues 678–701 (EKAWLPNSPPRNSPLPPPEASESL) and 893–999 (SELD…PNSP). Over residues 684–696 (NSPPRNSPLPPPE) the composition is skewed to pro residues. 2 stretches are compositionally biased toward acidic residues: residues 893-903 (SELDPGSELDS) and 912-947 (ELESELETDAQTEPETEEEPELEPEPEPEPETEPEP). Residues 973 to 982 (GSSNSQSRAP) are compositionally biased toward polar residues.

Belongs to the SLC26A/SulP transporter (TC 2.A.53) family. As to quaternary structure, interacts with RACGAP1. Interacts with CFTR; stimulates anion transport activity of CFTR. In terms of processing, N-glycosylated. In terms of tissue distribution, expressed in testis and epididymis. Located at the end of the midpiece of the flagella, known as the annulus, in spermatozoa.

The protein localises to the membrane. It carries out the reaction sulfate(out) + chloride(in) = sulfate(in) + chloride(out). The catalysed reaction is oxalate(in) + chloride(out) = oxalate(out) + chloride(in). Antiporter that mediates the exchange of sulfate and oxalate against chloride ions across a membrane. Stimulates anion transport activity of CFTR. May cooperate with CFTR in the regulation of chloride and bicarbonate ions fluxes required for activation of the ADCY10/PKA pathway during sperm motility and sperm capacitation. May play a role in sperm tail differentiation and motility and hence male fertility. This is Testis anion transporter 1 from Mus musculus (Mouse).